We begin with the raw amino-acid sequence, 70 residues long: MPGIVVHQGEDFESAYRKFKRQVDRNLIVVELRKRRFYEPPSERRKKEKIATRKKILRKLWMLRRYESRL.

It belongs to the bacterial ribosomal protein bS21 family.

This chain is Small ribosomal subunit protein bS21, found in Nautilia profundicola (strain ATCC BAA-1463 / DSM 18972 / AmH).